The following is a 203-amino-acid chain: Ribonuclease HII (203 aa).

The RNase H type-2 domain maps to 18-203; the sequence is GQYAGVDEVG…SFRPVREALA (186 aa). Residues Asp24, Glu25, and Asp116 each contribute to the a divalent metal cation site.

Belongs to the RNase HII family. Mn(2+) serves as cofactor. Mg(2+) is required as a cofactor.

The protein localises to the cytoplasm. It carries out the reaction Endonucleolytic cleavage to 5'-phosphomonoester.. In terms of biological role, endonuclease that specifically degrades the RNA of RNA-DNA hybrids. In Shewanella pealeana (strain ATCC 700345 / ANG-SQ1), this protein is Ribonuclease HII.